We begin with the raw amino-acid sequence, 720 residues long: NADH-ubiquinone oxidoreductase 78 kDa subunit, mitochondrial (720 aa).

The N-terminal 23 residues, 1–23 (MNSIKSHILRSSKRYISASSKRL), are a transit peptide targeting the mitochondrion. Positions 24–102 (AEVEVTVDGR…GMVVHTDSER (79 aa)) constitute a 2Fe-2S ferredoxin-type domain. Cysteine 58, cysteine 69, cysteine 72, and cysteine 86 together coordinate [2Fe-2S] cluster. The 4Fe-4S His(Cys)3-ligated-type domain occupies 102 to 141 (RIKKAREGVTEMLLENHPLDCPVCDQGGECDLQEQSQRYG). One can recognise a 4Fe-4S Mo/W bis-MGD-type domain in the interval 241 to 297 (LKRTETIDVLDAVGSNIRVDTRGIEVMRVLPRLNDDVNEEWISDKTRFACDGLKTQR).

The protein belongs to the complex I 75 kDa subunit family. Core subunit of respiratory chain NADH dehydrogenase (Complex I) which is composed of 45 different subunits. This is the largest subunit of complex I and it is a component of the iron-sulfur (IP) fragment of the enzyme. [2Fe-2S] cluster is required as a cofactor. The cofactor is [4Fe-4S] cluster.

It localises to the mitochondrion. It carries out the reaction a ubiquinone + NADH + 5 H(+)(in) = a ubiquinol + NAD(+) + 4 H(+)(out). Core subunit of the mitochondrial membrane respiratory chain NADH dehydrogenase (Complex I) which catalyzes electron transfer from NADH through the respiratory chain, using ubiquinone as an electron acceptor. Essential for catalysing the entry and efficient transfer of electrons within complex I. Plays a key role in the assembly and stability of complex I and participates in the association of complex I with ubiquinol-cytochrome reductase complex (Complex III) to form supercomplexes. Plays a role in cell wall integrity and is involved in osmotic and oxidative resistance, yeast to hypha transition, and the ability to damage and invade oral epithelial cells. This Candida albicans (strain SC5314 / ATCC MYA-2876) (Yeast) protein is NADH-ubiquinone oxidoreductase 78 kDa subunit, mitochondrial.